Consider the following 917-residue polypeptide: Ion channel POLLUX (917 aa).

Residues Met1–His154 are disordered. The segment covering Ala7 to Ser19 has biased composition (low complexity). Over residues His78 to Thr89 the composition is skewed to polar residues. The segment covering Lys119–Thr136 has biased composition (low complexity). 4 helical membrane-spanning segments follow: residues Pro160–Leu180, Leu230–Leu250, Leu290–Val310, and Val342–Val362. 2 consecutive RCK N-terminal domains span residues Arg383–Val524 and Pro643–Ile792. Positions Val413–Asp435 form a coiled coil.

This sequence belongs to the castor/pollux (TC 1.A.1.23) family. As to quaternary structure, homooligomer. In terms of tissue distribution, mainly expressed in nodules. Also detected in infected and uninfected roots, leaves, seed pods, and flower buds.

Its subcellular location is the nucleus membrane. Ion channel with permeability for potassium. Involved in perinuclear calcium spiking but not in cytosolic calcium influx. Required for early signal transduction events leading to endosymbiosis. Acts early in a signal transduction chain leading from the perception of Nod factor to the activation of calcium spiking. Also involved in fungal entry into root epidermal cells during the establishment of the arbuscular mycorrhizal symbiosis. In Lotus japonicus (Lotus corniculatus var. japonicus), this protein is Ion channel POLLUX (POLLUX).